The following is a 299-amino-acid chain: Biotin synthase (299 aa).

Positions threonine 22 to arginine 252 constitute a Radical SAM core domain. Cysteine 40, cysteine 44, and cysteine 47 together coordinate [4Fe-4S] cluster. Residues cysteine 116, cysteine 176, and lysine 247 each coordinate [2Fe-2S] cluster.

This sequence belongs to the radical SAM superfamily. Biotin synthase family. Homodimer. It depends on [4Fe-4S] cluster as a cofactor. The cofactor is [2Fe-2S] cluster.

It carries out the reaction (4R,5S)-dethiobiotin + (sulfur carrier)-SH + 2 reduced [2Fe-2S]-[ferredoxin] + 2 S-adenosyl-L-methionine = (sulfur carrier)-H + biotin + 2 5'-deoxyadenosine + 2 L-methionine + 2 oxidized [2Fe-2S]-[ferredoxin]. The protein operates within cofactor biosynthesis; biotin biosynthesis; biotin from 7,8-diaminononanoate: step 2/2. In terms of biological role, catalyzes the conversion of dethiobiotin (DTB) to biotin by the insertion of a sulfur atom into dethiobiotin via a radical-based mechanism. The protein is Biotin synthase of Thermotoga petrophila (strain ATCC BAA-488 / DSM 13995 / JCM 10881 / RKU-1).